The sequence spans 327 residues: Malate dehydrogenase (327 aa).

11-17 (GAAGQIG) contacts NAD(+). Residues R92 and R98 each contribute to the substrate site. Residues N105, Q112, and 129 to 131 (VGN) contribute to the NAD(+) site. Substrate is bound by residues N131 and R162. H187 acts as the Proton acceptor in catalysis.

The protein belongs to the LDH/MDH superfamily. MDH type 2 family.

The enzyme catalyses (S)-malate + NAD(+) = oxaloacetate + NADH + H(+). Its function is as follows. Catalyzes the reversible oxidation of malate to oxaloacetate. This is Malate dehydrogenase from Thermus thermophilus (strain ATCC BAA-163 / DSM 7039 / HB27).